The primary structure comprises 232 residues: Flagellar L-ring protein (232 aa).

An N-terminal signal peptide occupies residues Met-1 to Gly-21. Cys-22 carries N-palmitoyl cysteine lipidation. Cys-22 is lipidated: S-diacylglycerol cysteine.

The protein belongs to the FlgH family. In terms of assembly, the basal body constitutes a major portion of the flagellar organelle and consists of four rings (L,P,S, and M) mounted on a central rod.

The protein localises to the cell outer membrane. The protein resides in the bacterial flagellum basal body. Functionally, assembles around the rod to form the L-ring and probably protects the motor/basal body from shearing forces during rotation. The chain is Flagellar L-ring protein from Salmonella choleraesuis (strain SC-B67).